An 841-amino-acid chain; its full sequence is Probable outer membrane usher protein EcpC (841 aa).

The N-terminal stretch at 1–29 is a signal peptide; that stretch reads MPLRRFSPGLKAQFAFGMVFLFVQPDASA.

It belongs to the EcpC/MatD family.

Its function is as follows. Part of the ecpRABCDE operon, which encodes the E.coli common pilus (ECP). ECP is found in both commensal and pathogenic strains and plays a dual role in early-stage biofilm development and host cell recognition. This Escherichia coli O6:H1 (strain CFT073 / ATCC 700928 / UPEC) protein is Probable outer membrane usher protein EcpC (ecpC).